The following is a 929-amino-acid chain: Isoleucine--tRNA ligase (929 aa).

Residues 58–68 (PYANGDIHIGH) carry the 'HIGH' region motif. Glu563 is an L-isoleucyl-5'-AMP binding site. A 'KMSKS' region motif is present at residues 605 to 609 (KMSKS). Lys608 lines the ATP pocket. 4 residues coordinate Zn(2+): Cys892, Cys895, Cys912, and Cys915.

This sequence belongs to the class-I aminoacyl-tRNA synthetase family. IleS type 1 subfamily. In terms of assembly, monomer. Requires Zn(2+) as cofactor.

It localises to the cytoplasm. The enzyme catalyses tRNA(Ile) + L-isoleucine + ATP = L-isoleucyl-tRNA(Ile) + AMP + diphosphate. In terms of biological role, catalyzes the attachment of isoleucine to tRNA(Ile). As IleRS can inadvertently accommodate and process structurally similar amino acids such as valine, to avoid such errors it has two additional distinct tRNA(Ile)-dependent editing activities. One activity is designated as 'pretransfer' editing and involves the hydrolysis of activated Val-AMP. The other activity is designated 'posttransfer' editing and involves deacylation of mischarged Val-tRNA(Ile). This Neisseria meningitidis serogroup C (strain 053442) protein is Isoleucine--tRNA ligase.